Reading from the N-terminus, the 361-residue chain is Phosphoserine aminotransferase (361 aa).

Arginine 43 contacts L-glutamate. Pyridoxal 5'-phosphate-binding positions include 77 to 78, tryptophan 103, threonine 152, aspartate 172, and glutamine 195; that span reads AS. Lysine 196 carries the post-translational modification N6-(pyridoxal phosphate)lysine. 237–238 contributes to the pyridoxal 5'-phosphate binding site; it reads NT.

Belongs to the class-V pyridoxal-phosphate-dependent aminotransferase family. SerC subfamily. Homodimer. Pyridoxal 5'-phosphate serves as cofactor.

The protein resides in the cytoplasm. It catalyses the reaction O-phospho-L-serine + 2-oxoglutarate = 3-phosphooxypyruvate + L-glutamate. The enzyme catalyses 4-(phosphooxy)-L-threonine + 2-oxoglutarate = (R)-3-hydroxy-2-oxo-4-phosphooxybutanoate + L-glutamate. It functions in the pathway amino-acid biosynthesis; L-serine biosynthesis; L-serine from 3-phospho-D-glycerate: step 2/3. It participates in cofactor biosynthesis; pyridoxine 5'-phosphate biosynthesis; pyridoxine 5'-phosphate from D-erythrose 4-phosphate: step 3/5. Catalyzes the reversible conversion of 3-phosphohydroxypyruvate to phosphoserine and of 3-hydroxy-2-oxo-4-phosphonooxybutanoate to phosphohydroxythreonine. The polypeptide is Phosphoserine aminotransferase (Desulfosudis oleivorans (strain DSM 6200 / JCM 39069 / Hxd3) (Desulfococcus oleovorans)).